The following is a 301-amino-acid chain: Transcription elongation factor A protein 1 (301 aa).

N-acetylmethionine is present on Met-1. The 78-residue stretch at 3–80 folds into the TFIIS N-terminal domain; it reads DEVIRIAKKM…KSWKKLLDGP (78 aa). A Glycyl lysine isopeptide (Lys-Gly) (interchain with G-Cter in ubiquitin) cross-link involves residue Lys-55. A phosphoserine mark is found at Ser-57, Ser-81, Ser-97, and Ser-100. Residues 76-93 are compositionally biased toward basic and acidic residues; sequence LLDGPSTDKDSEEKKKDT. Residues 76–139 form a disordered region; sequence LLDGPSTDKD…FPRAPSTSDS (64 aa). The TFIIS central domain occupies 140–256; it reads VRLKCREMLA…EHQMAKTGGT (117 aa). The segment at 259–299 adopts a TFIIS-type zinc-finger fold; that stretch reads DLFTCGKCKKKNCTYTQVQTRSADEPMTTFVVCNECGNRWK. Residues Cys-263, Cys-266, Cys-291, and Cys-294 each contribute to the Zn(2+) site.

This sequence belongs to the TFS-II family. Interacts with EAF2. Associates with UBR5 and forms a transcription regulatory complex made of CDK9, Pol II, UBR5 and TCEA1/TFIIS. Part of TBP-based Pol II pre-initiation complex (PIC), in which Pol II core assembles with general transcription factors and other specific initiation factors including GTF2E1, GTF2E2, GTF2F1, GTF2F2, TCEA1, ERCC2, ERCC3, GTF2H2, GTF2H3, GTF2H4, GTF2H5, GTF2A1, GTF2A2, GTF2B and TBP; this large multi-subunit PIC complex mediates DNA unwinding and targets Pol II core to the transcription start site where the first phosphodiester bond forms.

Its subcellular location is the nucleus. Functionally, necessary for efficient RNA polymerase II transcription elongation past template-encoded arresting sites. The arresting sites in DNA have the property of trapping a certain fraction of elongating RNA polymerases that pass through, resulting in locked ternary complexes. Cleavage of the nascent transcript by S-II allows the resumption of elongation from the new 3'-terminus. The chain is Transcription elongation factor A protein 1 (TCEA1) from Bos taurus (Bovine).